The primary structure comprises 230 residues: Small ribosomal subunit protein uS3 (230 aa).

The region spanning 39 to 107 (VRKFLVEKLQ…PAQINIAEIR (69 aa)) is the KH type-2 domain.

The protein belongs to the universal ribosomal protein uS3 family. In terms of assembly, part of the 30S ribosomal subunit. Forms a tight complex with proteins S10 and S14.

In terms of biological role, binds the lower part of the 30S subunit head. Binds mRNA in the 70S ribosome, positioning it for translation. The chain is Small ribosomal subunit protein uS3 from Shewanella putrefaciens (strain CN-32 / ATCC BAA-453).